Reading from the N-terminus, the 303-residue chain is Signal recognition particle receptor FtsY (303 aa).

Residues 108–115 (GVNGAGKT), 190–194 (DTAGR), and 254–257 (TKLD) contribute to the GTP site.

Belongs to the GTP-binding SRP family. FtsY subfamily. In terms of assembly, part of the signal recognition particle protein translocation system, which is composed of SRP and FtsY. SRP is a ribonucleoprotein composed of Ffh and a 4.5S RNA molecule.

It is found in the cell inner membrane. The protein localises to the cytoplasm. The enzyme catalyses GTP + H2O = GDP + phosphate + H(+). In terms of biological role, involved in targeting and insertion of nascent membrane proteins into the cytoplasmic membrane. Acts as a receptor for the complex formed by the signal recognition particle (SRP) and the ribosome-nascent chain (RNC). Interaction with SRP-RNC leads to the transfer of the RNC complex to the Sec translocase for insertion into the membrane, the hydrolysis of GTP by both Ffh and FtsY, and the dissociation of the SRP-FtsY complex into the individual components. This chain is Signal recognition particle receptor FtsY, found in Rickettsia bellii (strain RML369-C).